A 465-amino-acid chain; its full sequence is Glutamate--tRNA ligase 2 (465 aa).

The short motif at 8 to 18 (PSPTGLMHLGN) is the 'HIGH' region element. A 'KMSKS' region motif is present at residues 249 to 253 (PLSKR). Lys-252 provides a ligand contact to ATP.

This sequence belongs to the class-I aminoacyl-tRNA synthetase family. Glutamate--tRNA ligase type 1 subfamily. In terms of assembly, monomer.

Its subcellular location is the cytoplasm. The enzyme catalyses tRNA(Glu) + L-glutamate + ATP = L-glutamyl-tRNA(Glu) + AMP + diphosphate. In terms of biological role, catalyzes the attachment of glutamate to tRNA(Glu) in a two-step reaction: glutamate is first activated by ATP to form Glu-AMP and then transferred to the acceptor end of tRNA(Glu). The chain is Glutamate--tRNA ligase 2 from Coxiella burnetii (strain RSA 331 / Henzerling II).